A 384-amino-acid chain; its full sequence is 1-deoxy-D-xylulose 5-phosphate reductoisomerase (384 aa).

NADPH-binding residues include Thr10, Gly11, Ser12, Ile13, Gly36, and Asn122. 1-deoxy-D-xylulose 5-phosphate is bound at residue Lys123. Glu124 is an NADPH binding site. Asp148 is a Mn(2+) binding site. 1-deoxy-D-xylulose 5-phosphate contacts are provided by Ser149, Glu150, Ser174, and His197. Glu150 provides a ligand contact to Mn(2+). Gly203 serves as a coordination point for NADPH. Residues Ser210, Asn215, Lys216, and Glu219 each contribute to the 1-deoxy-D-xylulose 5-phosphate site. Glu219 is a Mn(2+) binding site.

This sequence belongs to the DXR family. Requires Mg(2+) as cofactor. The cofactor is Mn(2+).

The catalysed reaction is 2-C-methyl-D-erythritol 4-phosphate + NADP(+) = 1-deoxy-D-xylulose 5-phosphate + NADPH + H(+). Its pathway is isoprenoid biosynthesis; isopentenyl diphosphate biosynthesis via DXP pathway; isopentenyl diphosphate from 1-deoxy-D-xylulose 5-phosphate: step 1/6. Its function is as follows. Catalyzes the NADPH-dependent rearrangement and reduction of 1-deoxy-D-xylulose-5-phosphate (DXP) to 2-C-methyl-D-erythritol 4-phosphate (MEP). This is 1-deoxy-D-xylulose 5-phosphate reductoisomerase from Chlorobium phaeobacteroides (strain DSM 266 / SMG 266 / 2430).